The sequence spans 446 residues: DILAAFRVTPQPGVPPEEAGAAVAAESSTGTWTTVWTDGLTSLDRYKGRCYGIEPVPGEEDQYIAYVAYPLDLFEEGSVTNMFTSIVGNVFGFKALRALRLEDLRIPPAYIKTFQGPPHGIQVERDKLNKYGRPLLGCTIKPKLGLSAKNYGRAVYECLRGGLDFTKDDENVNSQPFMRWRDRFLFCAEAINKAQAETGEIKGHYLNATAGTCEEMIKRAVFARGLGVPIVMHDYLTGGFTANTSLAHYCRDNGLLLHIHRAMHAVIDRQKNHGIHFRVLRKALRMSGGDHIHSGTVVGKLEGERDITLGFVDLLRDDFIEKDRSXGIYFTQDWVSLPGVIPVASGGIHVWHMPALTEIFGGDSVLQFGGGTLGHPWGNAPGAVANRVALEACVQARNEGRDLAVEGNEIIREASKWSPELAAACEVWKEIRFNFKAVDTLDPLKS.

Residues Asn89 and Thr139 each coordinate substrate. Lys141 serves as the catalytic Proton acceptor. Substrate is bound at residue Lys143. The Mg(2+) site is built by Lys167, Asp169, and Glu170. Lys167 is modified (N6-carboxylysine). His260 functions as the Proton acceptor in the catalytic mechanism. 3 residues coordinate substrate: Arg261, His293, and Ser345.

This sequence belongs to the RuBisCO large chain family. Type I subfamily. Heterohexadecamer of 8 large chains and 8 small chains; disulfide-linked. The disulfide link is formed within the large subunit homodimers. Mg(2+) serves as cofactor. In terms of processing, the disulfide bond which can form in the large chain dimeric partners within the hexadecamer appears to be associated with oxidative stress and protein turnover.

The protein resides in the plastid. Its subcellular location is the chloroplast. The catalysed reaction is 2 (2R)-3-phosphoglycerate + 2 H(+) = D-ribulose 1,5-bisphosphate + CO2 + H2O. The enzyme catalyses D-ribulose 1,5-bisphosphate + O2 = 2-phosphoglycolate + (2R)-3-phosphoglycerate + 2 H(+). Functionally, ruBisCO catalyzes two reactions: the carboxylation of D-ribulose 1,5-bisphosphate, the primary event in carbon dioxide fixation, as well as the oxidative fragmentation of the pentose substrate in the photorespiration process. Both reactions occur simultaneously and in competition at the same active site. This chain is Ribulose bisphosphate carboxylase large chain, found in Exacum affine (Persian violet).